We begin with the raw amino-acid sequence, 293 residues long: Deubiquitinase OTUD6B (293 aa).

Disordered regions lie at residues 1–43 and 57–114; these read MEEV…RRKQ and QKHE…LEKE. Residues 147-284 form the OTU domain; the sequence is LQIKEISSDG…GEHYNSVEPL (138 aa). The cys-loop stretch occupies residues 152–158; the sequence is ISSDGHC. The active site involves Asp155. Cys158 (nucleophile) is an active-site residue. Residues 219–229 are variable-loop; the sequence is VADTAAWGGQL. The his-loop stretch occupies residues 267 to 277; that stretch reads YMRHAYGLGEH. His277 is a catalytic residue.

The enzyme catalyses Thiol-dependent hydrolysis of ester, thioester, amide, peptide and isopeptide bonds formed by the C-terminal Gly of ubiquitin (a 76-residue protein attached to proteins as an intracellular targeting signal).. Its function is as follows. Deubiquitinating enzyme that may play a role in the ubiquitin-dependent regulation of different cellular processes. The protein is Deubiquitinase OTUD6B (otud6b) of Danio rerio (Zebrafish).